The primary structure comprises 62 residues: Small ribosomal subunit protein eS27 (62 aa).

Residues Cys17, Cys20, Cys36, and Cys39 each contribute to the Zn(2+) site. The C4-type zinc finger occupies 17 to 39 (CPDCENEQIIFEKASTVVDCVVC).

It belongs to the eukaryotic ribosomal protein eS27 family. Part of the 30S ribosomal subunit. The cofactor is Zn(2+).

This chain is Small ribosomal subunit protein eS27, found in Methanosphaerula palustris (strain ATCC BAA-1556 / DSM 19958 / E1-9c).